The following is a 509-amino-acid chain: Putative Rieske 2Fe-2S iron-sulfur protein YhfW (509 aa).

Residues 423 to 509 (KPDVQFEDIS…IKPLKQIDLD (87 aa)) form the Rieske domain. The [2Fe-2S] cluster site is built by C463, H465, C481, and H484. Cysteines 468 and 483 form a disulfide.

It belongs to the Rieske iron-sulfur protein family. The cofactor is [2Fe-2S] cluster.

This chain is Putative Rieske 2Fe-2S iron-sulfur protein YhfW (yhfW), found in Bacillus subtilis (strain 168).